We begin with the raw amino-acid sequence, 270 residues long: Thiazole synthase (270 aa).

K112 functions as the Schiff-base intermediate with DXP in the catalytic mechanism. 1-deoxy-D-xylulose 5-phosphate-binding positions include G173, 199-200, and 221-222; these read AG and NS.

This sequence belongs to the ThiG family. As to quaternary structure, homotetramer. Forms heterodimers with either ThiH or ThiS.

It is found in the cytoplasm. The enzyme catalyses [ThiS sulfur-carrier protein]-C-terminal-Gly-aminoethanethioate + 2-iminoacetate + 1-deoxy-D-xylulose 5-phosphate = [ThiS sulfur-carrier protein]-C-terminal Gly-Gly + 2-[(2R,5Z)-2-carboxy-4-methylthiazol-5(2H)-ylidene]ethyl phosphate + 2 H2O + H(+). The protein operates within cofactor biosynthesis; thiamine diphosphate biosynthesis. Its function is as follows. Catalyzes the rearrangement of 1-deoxy-D-xylulose 5-phosphate (DXP) to produce the thiazole phosphate moiety of thiamine. Sulfur is provided by the thiocarboxylate moiety of the carrier protein ThiS. In vitro, sulfur can be provided by H(2)S. The protein is Thiazole synthase of Pseudomonas entomophila (strain L48).